The chain runs to 184 residues: Large ribosomal subunit protein bL9 (184 aa).

A disordered region spans residues 156–184; that stretch reads RQAKLQNQKSEQQEAEQDASKEAADADDS. Residues 173–184 show a composition bias toward basic and acidic residues; sequence DASKEAADADDS.

The protein belongs to the bacterial ribosomal protein bL9 family.

Binds to the 23S rRNA. The chain is Large ribosomal subunit protein bL9 from Wolbachia pipientis subsp. Culex pipiens (strain wPip).